Consider the following 410-residue polypeptide: Cytochrome P450 CYP107DY1 (410 aa).

His-106 and Arg-110 together coordinate heme. Residues Thr-249 and Glu-253 each contribute to the substrate site. Arg-302, His-358, and Cys-360 together coordinate heme.

Belongs to the cytochrome P450 family. Requires heme as cofactor.

The enzyme catalyses mevastatin + 2 reduced [2Fe-2S]-[ferredoxin] + O2 + 2 H(+) = pravastatin lactone + 2 oxidized [2Fe-2S]-[ferredoxin] + H2O. Cytochrome P450 whose physiological substrate is unknown. In vitro, is able to catalyze the selective hydroxylation of mevastatin to pravastatin, the widely used therapeutic agent for hypercholesterolemia. In Priestia megaterium (strain ATCC 12872 / QMB1551) (Bacillus megaterium), this protein is Cytochrome P450 CYP107DY1.